The sequence spans 504 residues: D-alanine--D-alanyl carrier protein ligase (504 aa).

152–153 is an ATP binding site; sequence TS. A D-alanine-binding site is contributed by Asp197. 292 to 297 provides a ligand contact to ATP; that stretch reads NTYGPT. Residue Val301 participates in D-alanine binding. ATP-binding positions include Asp383, 394 to 397, and Lys492; that span reads YNGR. Residue Lys492 coordinates D-alanine.

It belongs to the ATP-dependent AMP-binding enzyme family. DltA subfamily.

The protein localises to the cytoplasm. It catalyses the reaction holo-[D-alanyl-carrier protein] + D-alanine + ATP = D-alanyl-[D-alanyl-carrier protein] + AMP + diphosphate. It participates in cell wall biogenesis; lipoteichoic acid biosynthesis. Functionally, catalyzes the first step in the D-alanylation of lipoteichoic acid (LTA), the activation of D-alanine and its transfer onto the D-alanyl carrier protein (Dcp) DltC. In an ATP-dependent two-step reaction, forms a high energy D-alanyl-AMP intermediate, followed by transfer of the D-alanyl residue as a thiol ester to the phosphopantheinyl prosthetic group of the Dcp. D-alanylation of LTA plays an important role in modulating the properties of the cell wall in Gram-positive bacteria, influencing the net charge of the cell wall. This Bacillus cytotoxicus (strain DSM 22905 / CIP 110041 / 391-98 / NVH 391-98) protein is D-alanine--D-alanyl carrier protein ligase.